Consider the following 419-residue polypeptide: S-adenosylmethionine synthase (419 aa).

Residue His-15 coordinates ATP. Asp-17 contacts Mg(2+). Glu-43 is a binding site for K(+). The L-methionine site is built by Glu-56 and Gln-99. A flexible loop region spans residues 99-109; the sequence is QSPEIAQGVSC. ATP is bound by residues 173-175, 253-254, Asp-262, 268-269, Ala-285, and Lys-289; these read DGK, RF, and RK. Asp-262 contributes to the L-methionine binding site. Lys-293 contacts L-methionine.

It belongs to the AdoMet synthase family. In terms of assembly, homotetramer; dimer of dimers. Mg(2+) serves as cofactor. K(+) is required as a cofactor.

It localises to the cytoplasm. It carries out the reaction L-methionine + ATP + H2O = S-adenosyl-L-methionine + phosphate + diphosphate. The protein operates within amino-acid biosynthesis; S-adenosyl-L-methionine biosynthesis; S-adenosyl-L-methionine from L-methionine: step 1/1. Catalyzes the formation of S-adenosylmethionine (AdoMet) from methionine and ATP. The overall synthetic reaction is composed of two sequential steps, AdoMet formation and the subsequent tripolyphosphate hydrolysis which occurs prior to release of AdoMet from the enzyme. The polypeptide is S-adenosylmethionine synthase (Gloeobacter violaceus (strain ATCC 29082 / PCC 7421)).